A 126-amino-acid chain; its full sequence is Nucleoside diphosphate kinase B (126 aa).

The ATP site is built by K6, F37, T68, R79, and N89. H92 acts as the Pros-phosphohistidine intermediate in catalysis.

Belongs to the NDK family. The cofactor is Mg(2+).

The protein resides in the cytoplasm. Its subcellular location is the nucleus. The protein localises to the cell projection. It is found in the lamellipodium. It localises to the ruffle. It carries out the reaction a 2'-deoxyribonucleoside 5'-diphosphate + ATP = a 2'-deoxyribonucleoside 5'-triphosphate + ADP. It catalyses the reaction a ribonucleoside 5'-diphosphate + ATP = a ribonucleoside 5'-triphosphate + ADP. Its function is as follows. Major role in the synthesis of nucleoside triphosphates other than ATP. This is Nucleoside diphosphate kinase B (nme2) from Merluccius capensis (Shallow-water Cape hake).